A 193-amino-acid chain; its full sequence is AP-3 complex subunit sigma-1 (193 aa).

Residue serine 191 is modified to Phosphoserine.

This sequence belongs to the adaptor complexes small subunit family. As to quaternary structure, adaptor protein complex 3 (AP-3) is a heterotetramer composed of two large adaptins (delta-type subunit AP3D1 and beta-type subunit AP3B1 or AP3B2), a medium adaptin (mu-type subunit AP3M1 or AP3M2) and a small adaptin (sigma-type subunit APS1 or AP3S2). Interacts with AGAP1. AP-3 associates with the BLOC-1 complex.

It is found in the golgi apparatus. It localises to the cytoplasmic vesicle membrane. In terms of biological role, part of the AP-3 complex, an adaptor-related complex which is not clathrin-associated. The complex is associated with the Golgi region as well as more peripheral structures. It facilitates the budding of vesicles from the Golgi membrane and may be directly involved in trafficking to lysosomes. In concert with the BLOC-1 complex, AP-3 is required to target cargos into vesicles assembled at cell bodies for delivery into neurites and nerve terminals. This chain is AP-3 complex subunit sigma-1 (AP3S1), found in Bos taurus (Bovine).